A 622-amino-acid chain; its full sequence is 4-hydroxyphenylalkanoate adenylyltransferase (622 aa).

Belongs to the ATP-dependent AMP-binding enzyme family.

It carries out the reaction 17-(4-hydroxyphenyl)heptadecanoate + holo-[(phenol)carboxyphthiodiolenone synthase] + ATP = 17-(4-hydroxyphenyl)heptadecanoyl-[(phenol)carboxyphthiodiolenone synthase] + AMP + diphosphate. The catalysed reaction is 19-(4-hydroxyphenyl)nonadecanoate + holo-[(phenol)carboxyphthiodiolenone synthase] + ATP = 19-(4-hydroxyphenyl)nonadecanoyl-[(phenol)carboxyphthiodiolenone synthase] + AMP + diphosphate. Its pathway is lipid metabolism; fatty acid biosynthesis. Catalyzes the activation of long-chain fatty acids as acyl-adenylates (acyl-AMP), which are then transferred to the multifunctional polyketide synthase PpsA for further chain extension. Involved in the biosynthesis of phenolphthiocerol, which is an important intermediate in the biosynthesis of phenolic glycolipid (PGL), also called mycosid B. This Mycobacterium marinum (strain ATCC BAA-535 / M) protein is 4-hydroxyphenylalkanoate adenylyltransferase (fadD29).